A 478-amino-acid polypeptide reads, in one-letter code: Proton-coupled amino acid transporter 2 (478 aa).

Composition is skewed to polar residues over residues 1–14 (MSVTKSARSPQVAT) and 26–37 (KLQSQDPSPANG). Positions 1–46 (MSVTKSARSPQVATPLNLDLPESAKKLQSQDPSPANGSSSESSKKT) are disordered. The Cytoplasmic portion of the chain corresponds to 1-53 (MSVTKSARSPQVATPLNLDLPESAKKLQSQDPSPANGSSSESSKKTKGITGFQ). The chain crosses the membrane as a helical span at residues 54 to 74 (TLVHLVKGNMGTGILGLPLAV). At 75-76 (KN) the chain is on the extracellular side. Residues 77–97 (AGILMGPLSLLVMGLIACHCM) traverse the membrane as a helical segment. Residues 98–143 (HILVRCAQRFCHRLNKPFMDYGDTVMHGLAFSPNAWLQNHAHWGRR) lie on the Cytoplasmic side of the membrane. Residues 144–164 (VVSFFLIVTQLGFCCVYIVFL) traverse the membrane as a helical segment. Residues 165-192 (ADNLKQVVEAVNSTTISCHKNETVVLTP) lie on the Extracellular side of the membrane. The helical transmembrane segment at 193–213 (TMDSRLYMLSFLPVLGLLVFV) threads the bilayer. Over 214–217 (RNLR) the chain is Cytoplasmic. The chain crosses the membrane as a helical span at residues 218–238 (VLTIFSLLANISMLVSLVIIA). At 239–259 (QYIIQEIPDASQLPLVASWKT) the chain is on the extracellular side. A helical membrane pass occupies residues 260-280 (YPLFFGTAIFSFESIGVVLPL). Residues 281–292 (ENKMKDARGFPT) are Cytoplasmic-facing. A helical transmembrane segment spans residues 293-313 (ILSLGMSIITTLYIAIGALGY). At 314–340 (LRFGDDIKASITLNLPNCWLYQSVKLL) the chain is on the extracellular side. Residues 341 to 361 (YVVGILCTYALQFYVPAEIII) traverse the membrane as a helical segment. The Cytoplasmic segment spans residues 362-374 (PLAVSQVSKRWAL). Residues 375 to 395 (PVDLSIRLALVCLTCMLAILI) form a helical membrane-spanning segment. Over 396-399 (PRLD) the chain is Extracellular. The chain crosses the membrane as a helical span at residues 400–420 (LVLSLVGSVSSSALALIIPPL). Residues 421–441 (LEVVTYYGEGISPLTVTKDAL) lie on the Cytoplasmic side of the membrane. A helical transmembrane segment spans residues 442-462 (ISILGFMGFVVGTYQALDELI). At 463–478 (KSGNSPALSNSTMFIQ) the chain is on the extracellular side.

It belongs to the amino acid/polyamine transporter 2 family. As to expression, expressed in spinal cord, brain, testis, lung, heart, colon, spleen, kidney and muscle. Found in neuronal cell bodies in the anterior horn, in spinal cord brain stem, cerebellum, hippocampus, hypothalamus, rhinencephalon, cerebral cortex, and olfactory bulb in the brain. Also expressed in bone and fat tissues.

It localises to the cell membrane. The protein resides in the endoplasmic reticulum membrane. It is found in the recycling endosome membrane. It catalyses the reaction glycine(in) + H(+)(in) = glycine(out) + H(+)(out). The enzyme catalyses L-alanine(in) + H(+)(in) = L-alanine(out) + H(+)(out). It carries out the reaction D-alanine(in) + H(+)(in) = D-alanine(out) + H(+)(out). The catalysed reaction is L-proline(out) + H(+)(out) = L-proline(in) + H(+)(in). It catalyses the reaction D-proline(out) + H(+)(out) = D-proline(in) + H(+)(in). The enzyme catalyses 4-hydroxy-L-proline(in) + H(+)(in) = 4-hydroxy-L-proline(out) + H(+)(out). It carries out the reaction L-serine(in) + H(+)(in) = L-serine(out) + H(+)(out). The catalysed reaction is D-serine(out) + H(+)(out) = D-serine(in) + H(+)(in). It catalyses the reaction beta-alanine(in) + H(+)(in) = beta-alanine(out) + H(+)(out). The enzyme catalyses 4-aminobutanoate(in) + H(+)(in) = 4-aminobutanoate(out) + H(+)(out). It carries out the reaction sarcosine(in) + H(+)(in) = sarcosine(out) + H(+)(out). The catalysed reaction is N,N-dimethylglycine(in) + H(+)(in) = N,N-dimethylglycine(out) + H(+)(out). Its function is as follows. Electrogenic proton/amino acid symporter with a high selectivity for the small side chains amino acids glycine, alanine and proline, where both L- and D-enantiomers are transported. Extension of the backbone length, as in beta-alanine and 4-aminobutanoate or methylation of the amino group, as in sarcosine and N,N-dimethylglycine, are also tolerated but decrease transport efficiency. A free carboxyl group is preferred. The sequence is that of Proton-coupled amino acid transporter 2 from Mus musculus (Mouse).